A 157-amino-acid polypeptide reads, in one-letter code: GTP-dependent dephospho-CoA kinase (157 aa).

Aspartate 40, aspartate 59, lysine 61, glutamate 107, and aspartate 128 together coordinate GTP.

It belongs to the GTP-dependent DPCK family.

The catalysed reaction is 3'-dephospho-CoA + GTP = GDP + CoA + H(+). Its pathway is cofactor biosynthesis; coenzyme A biosynthesis. Catalyzes the GTP-dependent phosphorylation of the 3'-hydroxyl group of dephosphocoenzyme A to form coenzyme A (CoA). The polypeptide is GTP-dependent dephospho-CoA kinase (Desulfurococcus amylolyticus (strain DSM 18924 / JCM 16383 / VKM B-2413 / 1221n) (Desulfurococcus kamchatkensis)).